We begin with the raw amino-acid sequence, 527 residues long: Neutrophil cytosol factor 2 (527 aa).

3 TPR repeats span residues 37–70, 71–104, and 121–154; these read SRIC…DKHL, AVSY…LRGN, and CEVL…KSEP. The residue at position 233 (threonine 233) is a Phosphothreonine. One can recognise an SH3 1 domain in the interval 240–299; it reads LEGEAHRVLFGFVPETPEELQVMPGNIVFVLKKGNDNWATVMFNGQKGLVPCNYLEPVEL. The segment at 304–345 is disordered; that stretch reads QQQPQEETSLESDIPAPPSSSAPGRPQLSPGQKGKEEPKQEI. Position 324 is a phosphoserine (serine 324). Basic and acidic residues predominate over residues 336-345; it reads KGKEEPKQEI. Positions 352-430 constitute a PB1 domain; that stretch reads SYTLKVHYKY…YCLTLWCENT (79 aa). Residue serine 400 is modified to Phosphoserine. Residues 434–457 are disordered; that stretch reads QGFPDEPEESKKSDANNQTTEPEL. The region spanning 458-517 is the SH3 2 domain; sequence KEGSKVVALFSYEATQPEDLEFLEGDVILVISTVNEQWLEGECKGKVGIFPKAFVEQHPT.

This sequence belongs to the NCF2/NOXA1 family. In terms of assembly, component of the phagocyte NADPH oxidase complex composed of an obligatory core heterodimer formed by the membrane proteins CYBA and CYBB and the cytosolic regulatory subunits NCF1/p47-phox, NCF2/p67-phox, NCF4/p40-phox and the small GTPase RAC1 or RAC2. Part of a cytosolic complex composed at least by NCF1, NCF2 and NCF4. Interacts with NCF4. Interacts (via the C-terminal SH3 domain) with NCF1 (via C-terminus). Interacts with SYTL1 and RAC1. May interact with NOXO1. Interacts with S100A8 and calprotectin (S100A8/9). Interacts with GBP7 (via GB1/RHD3-type G domain). Interacts with CYBB; the interaction is enhanced in the presence of GBP7.

Its subcellular location is the cytoplasm. Functionally, subunit of the phagocyte NADPH oxidase complex that mediates the transfer of electrons from cytosolic NADPH to O2 to produce the superoxide anion (O2(-)). In the activated complex, electrons are first transferred from NADPH to flavin adenine dinucleotide (FAD) and subsequently transferred via two heme molecules to molecular oxygen, producing superoxide through an outer-sphere reaction. Activation of the NADPH oxidase complex is initiated by the assembly of cytosolic subunits of the NADPH oxidase complex with the core NADPH oxidase complex to form a complex at the plasma membrane or phagosomal membrane. This activation process is initiated by phosphorylation dependent binding of the cytosolic NCF1/p47-phox subunit to the C-terminus of CYBA/p22-phox. This chain is Neutrophil cytosol factor 2, found in Bos taurus (Bovine).